The sequence spans 1025 residues: Multidrug resistance protein MdtC (1025 aa).

A run of 12 helical transmembrane segments spans residues F3–L23, E333–L353, I360–C380, L387–L407, V431–L451, F463–P483, L528–P548, V853–S873, V875–L895, L897–V917, P953–G973, and I984–V1004.

The protein belongs to the resistance-nodulation-cell division (RND) (TC 2.A.6) family. MdtC subfamily. Part of a tripartite efflux system composed of MdtA, MdtB and MdtC. MdtC forms a heteromultimer with MdtB.

The protein localises to the cell inner membrane. Functionally, the MdtABC tripartite complex confers resistance against novobiocin and deoxycholate. This chain is Multidrug resistance protein MdtC, found in Escherichia coli (strain UTI89 / UPEC).